Here is a 457-residue protein sequence, read N- to C-terminus: Siroheme synthase (457 aa).

The tract at residues 1–204 (MDHLPIFCQL…NDQKAITETT (204 aa)) is precorrin-2 dehydrogenase /sirohydrochlorin ferrochelatase. Residues 22-23 (DV) and 43-44 (LA) contribute to the NAD(+) site. Serine 128 is modified (phosphoserine). The interval 216–457 (GEVVLVGAGP…RDKLNWFSNH (242 aa)) is uroporphyrinogen-III C-methyltransferase. Residue proline 225 participates in S-adenosyl-L-methionine binding. The active-site Proton acceptor is the aspartate 248. The Proton donor role is filled by lysine 270. Residues 301 to 303 (GGD), isoleucine 306, 331 to 332 (TA), methionine 382, and glycine 411 contribute to the S-adenosyl-L-methionine site.

It in the N-terminal section; belongs to the precorrin-2 dehydrogenase / sirohydrochlorin ferrochelatase family. The protein in the C-terminal section; belongs to the precorrin methyltransferase family.

The enzyme catalyses uroporphyrinogen III + 2 S-adenosyl-L-methionine = precorrin-2 + 2 S-adenosyl-L-homocysteine + H(+). It carries out the reaction precorrin-2 + NAD(+) = sirohydrochlorin + NADH + 2 H(+). The catalysed reaction is siroheme + 2 H(+) = sirohydrochlorin + Fe(2+). It functions in the pathway cofactor biosynthesis; adenosylcobalamin biosynthesis; precorrin-2 from uroporphyrinogen III: step 1/1. Its pathway is cofactor biosynthesis; adenosylcobalamin biosynthesis; sirohydrochlorin from precorrin-2: step 1/1. The protein operates within porphyrin-containing compound metabolism; siroheme biosynthesis; precorrin-2 from uroporphyrinogen III: step 1/1. It participates in porphyrin-containing compound metabolism; siroheme biosynthesis; siroheme from sirohydrochlorin: step 1/1. It functions in the pathway porphyrin-containing compound metabolism; siroheme biosynthesis; sirohydrochlorin from precorrin-2: step 1/1. Multifunctional enzyme that catalyzes the SAM-dependent methylations of uroporphyrinogen III at position C-2 and C-7 to form precorrin-2 via precorrin-1. Then it catalyzes the NAD-dependent ring dehydrogenation of precorrin-2 to yield sirohydrochlorin. Finally, it catalyzes the ferrochelation of sirohydrochlorin to yield siroheme. The chain is Siroheme synthase from Escherichia coli O45:K1 (strain S88 / ExPEC).